Reading from the N-terminus, the 284-residue chain is Protoheme IX farnesyltransferase (284 aa).

Transmembrane regions (helical) follow at residues 13–33, 35–55, 87–107, 108–128, 133–153, 162–182, 224–244, and 264–284; these read IIIG…FPFF, VFLF…SCIF, IFAS…VNIL, SMFL…FFLK, YSTF…HTAI, FLLF…IAIL, FLGY…FYWL, and FYYS…DFIF.

Belongs to the UbiA prenyltransferase family. Protoheme IX farnesyltransferase subfamily.

The protein localises to the cell membrane. It catalyses the reaction heme b + (2E,6E)-farnesyl diphosphate + H2O = Fe(II)-heme o + diphosphate. It functions in the pathway porphyrin-containing compound metabolism; heme O biosynthesis; heme O from protoheme: step 1/1. In terms of biological role, converts heme B (protoheme IX) to heme O by substitution of the vinyl group on carbon 2 of heme B porphyrin ring with a hydroxyethyl farnesyl side group. In Buchnera aphidicola subsp. Schizaphis graminum (strain Sg), this protein is Protoheme IX farnesyltransferase.